A 105-amino-acid polypeptide reads, in one-letter code: uncharacterized protein (105 aa).

The chain crosses the membrane as a helical span at residues 13 to 35 (LLFAFVVVIVVLTLSYVYAQNII).

It is found in the membrane. This is an uncharacterized protein from Archaeoglobus fulgidus (strain ATCC 49558 / DSM 4304 / JCM 9628 / NBRC 100126 / VC-16).